The primary structure comprises 155 residues: Dau c 1 isoallergen Dau c 1.0401 (155 aa).

The protein belongs to the BetVI family. As to quaternary structure, monomer. As to expression, expressed in roots (at protein level). Expressed in roots.

In Daucus carota subsp. sativus (Carrot), this protein is Dau c 1 isoallergen Dau c 1.0401.